The sequence spans 678 residues: SPS-sensor component PTR3 (678 aa).

2 disordered regions span residues 111-158 (TGQG…SDPT) and 179-211 (ANTEVGSDHPLTTGTTRDQEEHTTKENYSSSLL). Positions 127 to 144 (TSPSSSSLSLTPSRSSST) are enriched in low complexity. Residues 149–158 (ADNKTLSDPT) are compositionally biased toward basic and acidic residues. The segment covering 179–194 (ANTEVGSDHPLTTGTT) has biased composition (polar residues).

Homodimer. Component of the plasma membrane SPS (SSY1-PTR3-SSY5) amino acid sensor complex. Interacts directly with SSY1 and SSY5. In terms of processing, hyperphosphorylated in response to extracellular amino acids and dependent on the amino acid sensor component SSY1. Phosphorylation is positively regulated by casein kinases YCK1 and YCK2, and negatively regulated by phosphatase PP2A regulatory subunit RTS1.

The protein localises to the cell membrane. Component of the SPS-sensor system, which regulates the expression of several amino acid-metabolizing enzymes and amino acid- and peptide-permeases in response to extracellular amino acid levels by controlling the activity of two transcription factors, STP1 and STP2. This is SPS-sensor component PTR3 (PTR3) from Saccharomyces cerevisiae (strain ATCC 204508 / S288c) (Baker's yeast).